Reading from the N-terminus, the 318-residue chain is Strigolactone esterase D14 (318 aa).

Residues 1-11 (MLRSTHPPPSS) are compositionally biased toward pro residues. The interval 1 to 48 (MLRSTHPPPSSPSSSSSGGGGGGGSSASSSSEKTMVGGGGGGGGGSGS) is disordered. Gly residues predominate over residues 36–47 (VGGGGGGGGGSG). Residue S147 is the Nucleophile of the active site. Residues S147 and C241 each contribute to the substrate site. Residues D268 and H297 contribute to the active site. A substrate-binding site is contributed by H297.

This sequence belongs to the AB hydrolase superfamily. As to quaternary structure, interacts with D53. The interaction between D53 and D14 is enhanced in the presence of strigolactones. The interaction with D53 occurs in the presence of (2'R) stereoisomers of strigolactones, but not (2'S) stereoisomers. Interacts with SLR1 in a strigolactone-dependent manner. Interacts with D3 in a strigolactone-dependent manner. Expressed in the parenchyma cells of the root stele and lateral roots, vascular tissues of vein and leaf sheath, ligule base, auricle base and stem base.

It is found in the cytoplasm. It localises to the nucleus. In terms of biological role, involved in strigolactone (SL) signaling pathway. May function downstream of SL synthesis, as a component of hormone signaling or as an enzyme that participates in the conversion of SL to the bioactive form. Strigolactones are hormones that inhibit tillering and shoot branching through the MAX-dependent pathway, contribute to the regulation of shoot architectural response to phosphate-limiting conditions and function as rhizosphere signal that stimulates hyphal branching of arbuscular mycorrhizal fungi and trigger seed germination of root parasitic weeds. Strigolactone-dependent association of D14 with D3 and D53 (a repressor of SL signaling) triggers D53 ubiquitination and degradation. Hydrolyzes the butenolide ring of SLs. A reaction product D-OH is trapped in the cavity of D14, inducing the interaction with SLR1, and probably with other proteins such as D3 and D53. Contributes to the negative regulation of gibberellin signaling. This is Strigolactone esterase D14 from Oryza sativa subsp. japonica (Rice).